The chain runs to 493 residues: Xaa-Pro dipeptidase (493 aa).

Position 2 is an N-acetylalanine (Ala2). Position 167 is a phosphoserine (Ser167). His255 contributes to the a dipeptide binding site. Residues Asp276, Asp287, and His370 each coordinate Mn(2+). Residue Asp287 participates in a dipeptide binding. A dipeptide contacts are provided by His377 and Arg398. Glu412 and Glu452 together coordinate Mn(2+).

The protein belongs to the peptidase M24B family. Eukaryotic-type prolidase subfamily. Homodimer. The cofactor is Mn(2+).

It catalyses the reaction Xaa-L-Pro dipeptide + H2O = an L-alpha-amino acid + L-proline. Functionally, dipeptidase that catalyzes the hydrolysis of dipeptides with a prolyl (Xaa-Pro) or hydroxyprolyl residue in the C-terminal position. The preferred dipeptide substrate is Gly-Pro, but other Xaa-Pro dipeptides, such as Ala-Pro, Met-Pro, Phe-Pro, Val-Pro and Leu-Pro, can be cleaved. Plays an important role in collagen metabolism because the high level of iminoacids in collagen. This chain is Xaa-Pro dipeptidase (PEPD), found in Pongo abelii (Sumatran orangutan).